We begin with the raw amino-acid sequence, 443 residues long: L-ornithine N(5)-monooxygenase (443 aa).

FAD is bound by residues 45 to 53 and Q64; that span reads DKQGDYRWH. Residue K69 coordinates substrate. V130 lines the FAD pocket. NADP(+) is bound by residues 215–218 and R240; that span reads GGQS. Residues 254 to 257 and N284 contribute to the substrate site; that span reads NEVF. 284-286 lines the NADP(+) pocket; that stretch reads NYS. 407–409 is a binding site for FAD; the sequence is TLL. S410 provides a ligand contact to substrate.

It belongs to the lysine N(6)-hydroxylase/L-ornithine N(5)-oxygenase family. As to quaternary structure, homotetramer. FAD is required as a cofactor.

It is found in the cell inner membrane. It carries out the reaction L-ornithine + NADPH + O2 = N(5)-hydroxy-L-ornithine + NADP(+) + H2O. Its pathway is siderophore biosynthesis; pyoverdin biosynthesis. Its function is as follows. Catalyzes the conversion of L-ornithine to N(5)-hydroxyornithine, the first step in the biosynthesis of all hydroxamate-containing siderophores, such as pyoverdin. Pyoverdin is a hydroxamate siderophore composed of a 6,7-dihydroxyquinoline-containing fluorescent chromophore joined to the N-terminus of a partly cyclic octapeptide (D-Ser-L-Arg-D-Ser-L-N(5)-OH-Orn-L-Lys-L-N(5)-OH-Orn-L-Thr-L-Thr in strain PAO1). Specific for NADPH, which plays a role in stabilization of the C4a-hydroperoxyflavin intermediate. The sequence is that of L-ornithine N(5)-monooxygenase from Pseudomonas aeruginosa (strain ATCC 15692 / DSM 22644 / CIP 104116 / JCM 14847 / LMG 12228 / 1C / PRS 101 / PAO1).